A 495-amino-acid chain; its full sequence is UDP-N-acetylmuramoyl-L-alanyl-D-glutamate--2,6-diaminopimelate ligase (495 aa).

Residues L27, S29, and 44–46 each bind UDP-N-acetyl-alpha-D-muramoyl-L-alanyl-D-glutamate; that span reads HQA. 116 to 122 serves as a coordination point for ATP; sequence GTNGKTT. Residues N157, 158-159, S185, Q191, and R193 each bind UDP-N-acetyl-alpha-D-muramoyl-L-alanyl-D-glutamate; that span reads TT. An N6-carboxylysine modification is found at K225. Meso-2,6-diaminopimelate-binding positions include R390, 414-417, G465, and E469; that span reads DNPR. Positions 414-417 match the Meso-diaminopimelate recognition motif motif; sequence DNPR.

Belongs to the MurCDEF family. MurE subfamily. The cofactor is Mg(2+). Carboxylation is probably crucial for Mg(2+) binding and, consequently, for the gamma-phosphate positioning of ATP.

The protein resides in the cytoplasm. It carries out the reaction UDP-N-acetyl-alpha-D-muramoyl-L-alanyl-D-glutamate + meso-2,6-diaminopimelate + ATP = UDP-N-acetyl-alpha-D-muramoyl-L-alanyl-gamma-D-glutamyl-meso-2,6-diaminopimelate + ADP + phosphate + H(+). Its pathway is cell wall biogenesis; peptidoglycan biosynthesis. Functionally, catalyzes the addition of meso-diaminopimelic acid to the nucleotide precursor UDP-N-acetylmuramoyl-L-alanyl-D-glutamate (UMAG) in the biosynthesis of bacterial cell-wall peptidoglycan. The chain is UDP-N-acetylmuramoyl-L-alanyl-D-glutamate--2,6-diaminopimelate ligase from Shigella flexneri.